The following is a 441-amino-acid chain: tRNA (guanine(37)-N(1))-methyltransferase (441 aa).

A mitochondrion-targeting transit peptide spans 1-9; it reads MFAPPAARA. S-adenosyl-L-methionine contacts are provided by residues Arg-221, 248–249, 276–277, and Asn-331; these read DL and DG.

The protein belongs to the class I-like SAM-binding methyltransferase superfamily. TRM5/TYW2 family. In terms of assembly, monomer.

Its subcellular location is the mitochondrion matrix. The protein localises to the nucleus. The protein resides in the cytoplasm. It catalyses the reaction guanosine(37) in tRNA + S-adenosyl-L-methionine = N(1)-methylguanosine(37) in tRNA + S-adenosyl-L-homocysteine + H(+). Its function is as follows. Specifically methylates the N1 position of guanosine-37 in various cytoplasmic and mitochondrial tRNAs. Methylation is not dependent on the nature of the nucleoside 5' of the target nucleoside. This is the first step in the biosynthesis of wybutosine (yW), a modified base adjacent to the anticodon of tRNAs and required for accurate decoding. This Phaeosphaeria nodorum (strain SN15 / ATCC MYA-4574 / FGSC 10173) (Glume blotch fungus) protein is tRNA (guanine(37)-N(1))-methyltransferase.